The primary structure comprises 182 residues: Large ribosomal subunit protein uL6 (182 aa).

This sequence belongs to the universal ribosomal protein uL6 family. Part of the 50S ribosomal subunit.

This protein binds to the 23S rRNA, and is important in its secondary structure. It is located near the subunit interface in the base of the L7/L12 stalk, and near the tRNA binding site of the peptidyltransferase center. The protein is Large ribosomal subunit protein uL6 of Methanococcus maripaludis (strain C6 / ATCC BAA-1332).